The following is a 159-amino-acid chain: Phosphopantetheine adenylyltransferase (159 aa).

Residue Thr-10 participates in substrate binding. Residues 10 to 11 and His-18 each bind ATP; that span reads TF. Substrate contacts are provided by Lys-42, Met-74, and Arg-88. Residues 89–91, Glu-99, and 124–130 contribute to the ATP site; these read GLR and WSFISSS.

It belongs to the bacterial CoaD family. As to quaternary structure, homohexamer. Mg(2+) is required as a cofactor.

It localises to the cytoplasm. It catalyses the reaction (R)-4'-phosphopantetheine + ATP + H(+) = 3'-dephospho-CoA + diphosphate. It functions in the pathway cofactor biosynthesis; coenzyme A biosynthesis; CoA from (R)-pantothenate: step 4/5. Reversibly transfers an adenylyl group from ATP to 4'-phosphopantetheine, yielding dephospho-CoA (dPCoA) and pyrophosphate. This Yersinia pseudotuberculosis serotype I (strain IP32953) protein is Phosphopantetheine adenylyltransferase.